A 302-amino-acid polypeptide reads, in one-letter code: Glutaminase (302 aa).

Substrate contacts are provided by Ser61, Asn111, Glu155, Asn162, Tyr186, Tyr238, and Val256.

The protein belongs to the glutaminase family. Homotetramer.

It carries out the reaction L-glutamine + H2O = L-glutamate + NH4(+). The protein is Glutaminase of Ectopseudomonas mendocina (strain ymp) (Pseudomonas mendocina).